Consider the following 654-residue polypeptide: MLLKKHAGKGGGREPRSEDPTPAEQHCARTMPPCAVLAALLSVVAVVSCLYLGVKTNDLQARIAALESAKGAPSIHLLPDTLDHLKTMVQEKVERLLAQKSYEHMAKIRIAREAPSECNCPAGPPGKRGKRGRRGESGPPGQPGPQGPPGPKGDKGEQGDQGPRMVFPKINHGFLSADQQLIKRRLIKGDQGQAGPPGPPGPPGPRGPPGDTGKDGPRGMPGVPGEPGKPGEQGLMGPLGPPGQKGSIGAPGIPGMNGQKGEPGLPGAVGQNGIPGPKGEPGEQGEKGDAGENGPKGDTGEKGDPGSSAAGIKGEPGESGRPGQKGEPGLPGLPGLPGIKGEPGFIGPQGEPGLPGLPGTKGERGEAGPPGRGERGEPGAPGPKGKQGESGTRGPKGSKGDRGEKGDSGAQGPRGPPGQKGDQGATEIIDYNGNLHEALQRITTLTVTGPPGPPGPQGLQGPKGEQGSPGIPGMDGEQGLKGSKGDMGDPGMTGEKGGIGLPGLPGANGMKGEKGDSGMPGPQGPSIIGPPGPPGPHGPPGPMGPHGLPGPKGTDGPMGPHGPAGPKGERGEKGAMGEPGPRGPYGLPGKDGEPGLDGFPGPRGEKGDLGEKGEKGFRGVKGEKGEPGQPGLDGLDAPCQLGPDGLPMPGCWQK.

A disordered region spans residues 1–26; sequence MLLKKHAGKGGGREPRSEDPTPAEQH. The Cytoplasmic segment spans residues 1-33; it reads MLLKKHAGKGGGREPRSEDPTPAEQHCARTMPP. A helical; Signal-anchor for type II membrane protein membrane pass occupies residues 34–54; sequence CAVLAALLSVVAVVSCLYLGV. Over 55-654 the chain is Extracellular; it reads KTNDLQARIA…GLPMPGCWQK (600 aa). Glutamate 113 bears the Pyrrolidone carboxylic acid (Glu) mark. The interval 116–168 is disordered; sequence SECNCPAGPPGKRGKRGRRGESGPPGQPGPQGPPGPKGDKGEQGDQGPRMVFP. One can recognise a Collagen-like 1 domain in the interval 121 to 164; sequence PAGPPGKRGKRGRRGESGPPGQPGPQGPPGPKGDKGEQGDQGPR. The segment covering 140-151 has biased composition (pro residues); it reads PGQPGPQGPPGP. The segment at 181 to 188 is interaction with amyloid-beta peptide; that stretch reads LIKRRLIK. Disordered stretches follow at residues 189–426 and 445–654; these read GDQG…QGAT and LTVT…CWQK. 5 Collagen-like domains span residues 192-247, 249-308, 311-370, 372-425, and 447-505; these read GQAG…QKGS, GAPG…PGSS, GIKG…AGPP, RGER…DQGA, and VTGP…PGLP. The segment covering 196–208 has biased composition (pro residues); sequence PPGPPGPPGPRGP. The segment covering 230–245 has biased composition (low complexity); that stretch reads PGEQGLMGPLGPPGQK. The span at 280–290 shows a compositional bias: basic and acidic residues; the sequence is EPGEQGEKGDA. Residues 336 to 358 show a composition bias toward low complexity; sequence LPGIKGEPGFIGPQGEPGLPGLP. Basic and acidic residues-rich tracts occupy residues 361–377 and 398–407; these read KGER…ERGE and SKGDRGEKGD. Over residues 457-466 the composition is skewed to low complexity; it reads QGLQGPKGEQ. Residues 494–503 show a composition bias toward gly residues; that stretch reads GEKGGIGLPG. Residues 517–527 are compositionally biased toward low complexity; that stretch reads SGMPGPQGPSI. Over residues 528 to 543 the composition is skewed to pro residues; that stretch reads IGPPGPPGPHGPPGPM. The region spanning 571-630 is the Collagen-like 7 domain; sequence GEKGAMGEPGPRGPYGLPGKDGEPGLDGFPGPRGEKGDLGEKGEKGFRGVKGEKGEPGQP. Over residues 603 to 626 the composition is skewed to basic and acidic residues; sequence RGEKGDLGEKGEKGFRGVKGEKGE.

Forms homodimers and homotrimers. Binds to the fibrillized forms of amyloid-beta protein 40 (beta-APP40) and amyloid-beta protein 42 (beta-APP42). Found associated with beta-APP42 more frequently than with beta-APP40. Post-translationally, undergoes proteolytic cleavage by furin protease to yield the soluble collagen-like Alzheimer amyloid plaque component. In terms of processing, glycosylated. Hydroxylated on 11% of proline residues and 49% of lysine residues. Expressed predominantly in brain. Deposited preferentially in primitive or neuritic amyloid plaques which are typical of Alzheimer disease.

The protein resides in the membrane. Its function is as follows. Inhibits fibrillization of amyloid-beta peptide during the elongation phase. Has also been shown to assemble amyloid fibrils into protease-resistant aggregates. Binds heparin. This Homo sapiens (Human) protein is Collagen alpha-1(XXV) chain.